The sequence spans 651 residues: Protein EXECUTER 2, chloroplastic (651 aa).

Residues 1–69 (MATTQPCLIG…KAPSLSCLRN (69 aa)) constitute a chloroplast transit peptide. Residues 103 to 138 (ESVVSLLKSQLEDAVEKEDFEEAVKLKQAISEATVD) form the UVR domain. Positions 330 to 359 (DATEELVGEGTEETNSSDDEEEVEEEENDS) are disordered.

It localises to the plastid. The protein resides in the chloroplast. In terms of biological role, together with EX1, enables higher plants to perceive singlet oxygen as a stress signal in plastid that activates a genetically determined nuclear stress response program which triggers a programmed cell death (PCD). This transfer of singlet oxygen-induced stress-related signals from the plastid to the nucleus that triggers genetically controlled PCD pathway is unique to photosynthetic eukaryotes and operates under mild stress conditions, impeding photosystem II (PSII) without causing photooxidative damage of the plant. This Arabidopsis thaliana (Mouse-ear cress) protein is Protein EXECUTER 2, chloroplastic.